We begin with the raw amino-acid sequence, 253 residues long: 1-(5-phosphoribosyl)-5-[(5-phosphoribosylamino)methylideneamino] imidazole-4-carboxamide isomerase (253 aa).

The active-site Proton acceptor is the Asp19. Residue Asp141 is the Proton donor of the active site.

Belongs to the HisA/HisF family.

It is found in the cytoplasm. The catalysed reaction is 1-(5-phospho-beta-D-ribosyl)-5-[(5-phospho-beta-D-ribosylamino)methylideneamino]imidazole-4-carboxamide = 5-[(5-phospho-1-deoxy-D-ribulos-1-ylimino)methylamino]-1-(5-phospho-beta-D-ribosyl)imidazole-4-carboxamide. It participates in amino-acid biosynthesis; L-histidine biosynthesis; L-histidine from 5-phospho-alpha-D-ribose 1-diphosphate: step 4/9. This Rhodopirellula baltica (strain DSM 10527 / NCIMB 13988 / SH1) protein is 1-(5-phosphoribosyl)-5-[(5-phosphoribosylamino)methylideneamino] imidazole-4-carboxamide isomerase.